Consider the following 35-residue polypeptide: Mu-theraphotoxin-Pn3b (35 aa).

Intrachain disulfides connect Cys2–Cys16, Cys9–Cys21, and Cys15–Cys28.

It belongs to the neurotoxin 10 (Hwtx-1) family. 28 (Jztx-11) subfamily. Expressed by the venom gland.

The protein resides in the secreted. Functionally, gating-modifier toxin that targets voltage-gated sodium channels with a preferential activity on Nav1.7/SCN9A. On Nav1.7/SCN9A, the toxin acts by shifting the voltage-dependence of activation to more depolarized potentials, whereas it does not cause significant effect on the voltage-dependence of activation on other sodium channels. Minor effects are observed on the voltage-dependence of steady-state fast inactivation for all sodium channels tested (Nav1.1/SCN1A-Nav1.8/SCN10A). By testing the toxin on channel chimera, it has been shown to interact with the S3-S4 linkers in DII and DIV domains of Nav1.7/SCN9A. In vivo, the toxin dose-dependently reduces OD1-induced spontaneous pain behaviors. The chain is Mu-theraphotoxin-Pn3b from Pamphobeteus nigricolor (Giant blue bloom tarantula).